Reading from the N-terminus, the 216-residue chain is Probable GTP-binding protein EngB (216 aa).

The region spanning 30-204 is the EngB-type G domain; the sequence is DGLEVAFAGR…HDVLARWLGL (175 aa). GTP contacts are provided by residues 38 to 45, 64 to 68, 82 to 85, 149 to 152, and 182 to 185; these read GRSNAGKS, GRTQL, DLPG, TKAD, and LFSA. Positions 45 and 66 each coordinate Mg(2+).

This sequence belongs to the TRAFAC class TrmE-Era-EngA-EngB-Septin-like GTPase superfamily. EngB GTPase family. Requires Mg(2+) as cofactor.

In terms of biological role, necessary for normal cell division and for the maintenance of normal septation. The polypeptide is Probable GTP-binding protein EngB (Azotobacter vinelandii (strain DJ / ATCC BAA-1303)).